The following is a 389-amino-acid chain: uncharacterized protein (389 aa).

Belongs to the mimivirus L17x/L18x family.

This is an uncharacterized protein from Acanthamoeba polyphaga mimivirus (APMV).